Reading from the N-terminus, the 146-residue chain is Large ribosomal subunit protein uL13 (146 aa).

The protein belongs to the universal ribosomal protein uL13 family. Part of the 50S ribosomal subunit.

Functionally, this protein is one of the early assembly proteins of the 50S ribosomal subunit, although it is not seen to bind rRNA by itself. It is important during the early stages of 50S assembly. This chain is Large ribosomal subunit protein uL13, found in Mycoplasma pneumoniae (strain ATCC 29342 / M129 / Subtype 1) (Mycoplasmoides pneumoniae).